We begin with the raw amino-acid sequence, 482 residues long: PHD finger protein At3g20280 (482 aa).

Residues 45–97 form a PHD-type zinc finger; it reads AMACQICEVTINEMDTLLICDACEKAYHLKCLQGNNMKGVPKSEWHCSRCVQA. Disordered stretches follow at residues 188–210 and 314–482; these read TNIG…APVS and SSNS…ENAA. Residues 314–324 are compositionally biased toward low complexity; sequence SSNSQQAVSHS. 2 stretches are compositionally biased toward polar residues: residues 377–386 and 393–428; these read ACQNHPTASP and QDST…NYDS. The segment covering 447-482 has biased composition (basic and acidic residues); the sequence is DSEKGKGLNGLDDRHQEQPSEPEFYKSDSVKEENAA.

The polypeptide is PHD finger protein At3g20280 (Arabidopsis thaliana (Mouse-ear cress)).